A 328-amino-acid polypeptide reads, in one-letter code: HTH-type transcriptional regulator MalR (328 aa).

The region spanning 2 to 57 is the HTH lacI-type domain; it reads PVTIKDVAKAAGVSPSTVTRVIQNKSTISDETKKRVRKAMKELNYHPNLNARSLVS. Positions 5 to 24 form a DNA-binding region, H-T-H motif; it reads IKDVAKAAGVSPSTVTRVIQ. The inducer binding stretch occupies residues 173–218; sequence TEYFIKKGCKRIAFIGGSKKLFVTKDRLTGYEQALKHYKLTTDNNR. Residues 282-291 are dimerization; that stretch reads NLAAYVDINS.

Transcriptional repressor of the maltosaccharide utilization operons malxCD and malMP. The chain is HTH-type transcriptional regulator MalR (malR) from Streptococcus pneumoniae serotype 4 (strain ATCC BAA-334 / TIGR4).